The following is an 834-amino-acid chain: MAVEEEGLRVFQSVRIKIGEAKNLPSYPGPNKMRDCYCTVNLDQEEVFRTKIVEKSLCPFYGEDFYCEIPRSFRHLSFYIFDRDVFRRDSIIGKVAIQKEDLQRYHNRDTWFQLQHVDADSEVQGKVHLELRLSEVITDTGVVCHKLAARIFECQGLPIVNGQCDPYATVTLAGPFRSEAKKTKVKKKTNNPQFDEVFYFEVTRPCSYSKKSHFDFEEEDVDKLEIRVDLWNASNLKFGDEFLGELRLPLKILRHSSSYEAWYFLQPRDNGNKSLKPDDLGSLRLNVVYTEDHVFSSEYYSPLRDLLLKSADVEPVSASAAHILGEVCRDKQEAAIPLVRLLLHYGRVVPFISAIASAEVKRTQDPNTIFRGNSLTSKCIDETMKLAGMHYLHVTLKPTIEEICQSHKSCEIDPVKLKDGENLENNMESLRQYVDRIFTVITKSGVSCPTVMCDIFFSLREAAAKRFQDDLDVRYTAVSSFIFLRFFAPAILSPNLFQLTPHHTDPQTSRTLTLISKTIQTLGSLSKSKSASFKESYMATFYEFFNEQKYADAVKNFLDLISSSGRRDPKSIEQPILLKEGFMIKRAQGRKRFGMKNFKKRWFRLTNHEFTYQKSKGDQPLCNIPIENILAVERLEEESFRMKNMFQVIQPERALYIQANNCVEAKDWIDILTKVSQCNQKRLTVFHPSAYLNGHWLCCRASSDTAAGCTPCTGGLPANIQLDIDGDRETERIYSLFNLYMGKLEKMQEACGSKSVYDGPEQEEYSTFVIDDPQETYKTLKQVIAGVGTLEQEHAQYRRDKFKKTRYGSQEHPIGDKSFQNYIRQQSEISTHSI.

C2 domains follow at residues 1 to 112 and 123 to 263; these read MAVE…DTWF and VQGK…EAWY. A2 is subject to N-acetylalanine. A Phosphotyrosine modification is found at Y66. A Phosphoserine modification is found at S77. T110 is subject to Phosphothreonine. A Ras-GAP domain is found at 346-561; that stretch reads GRVVPFISAI…DAVKNFLDLI (216 aa). In terms of domain architecture, PH spans 576 to 677; sequence ILLKEGFMIK…WIDILTKVSQ (102 aa). A Btk-type zinc finger spans residues 679 to 715; that stretch reads NQKRLTVFHPSAYLNGHWLCCRASSDTAAGCTPCTGG. Zn(2+)-binding residues include H687, C698, C699, and C709. 2 positions are modified to phosphoserine: S809 and S833.

High levels in brain, lower in spleen and lung.

Functionally, inhibitory regulator of the Ras-cyclic AMP pathway. May bind inositol tetrakisphosphate (IP4). This chain is Ras GTPase-activating protein 3 (Rasa3), found in Mus musculus (Mouse).